Reading from the N-terminus, the 416-residue chain is Multifunctional CCA protein (416 aa).

2 residues coordinate ATP: Gly8 and Arg11. CTP is bound by residues Gly8 and Arg11. Asp21 and Asp23 together coordinate Mg(2+). Arg91, Arg137, and Arg140 together coordinate ATP. Residues Arg91, Arg137, and Arg140 each contribute to the CTP site. Residues Ser228–Trp335 form the HD domain.

This sequence belongs to the tRNA nucleotidyltransferase/poly(A) polymerase family. Bacterial CCA-adding enzyme type 1 subfamily. Monomer. Can also form homodimers and oligomers. Requires Mg(2+) as cofactor. It depends on Ni(2+) as a cofactor.

It catalyses the reaction a tRNA precursor + 2 CTP + ATP = a tRNA with a 3' CCA end + 3 diphosphate. It carries out the reaction a tRNA with a 3' CCA end + 2 CTP + ATP = a tRNA with a 3' CCACCA end + 3 diphosphate. Catalyzes the addition and repair of the essential 3'-terminal CCA sequence in tRNAs without using a nucleic acid template. Adds these three nucleotides in the order of C, C, and A to the tRNA nucleotide-73, using CTP and ATP as substrates and producing inorganic pyrophosphate. tRNA 3'-terminal CCA addition is required both for tRNA processing and repair. Also involved in tRNA surveillance by mediating tandem CCA addition to generate a CCACCA at the 3' terminus of unstable tRNAs. While stable tRNAs receive only 3'-terminal CCA, unstable tRNAs are marked with CCACCA and rapidly degraded. This Haemophilus influenzae (strain PittGG) protein is Multifunctional CCA protein.